A 236-amino-acid chain; its full sequence is N-alpha-acetyltransferase 40 (236 aa).

Gly2 carries N-myristoyl glycine lipidation. An N-acetyltransferase domain is found at 63–217 (SDLDQKTIDW…DCTYEILSKR (155 aa)). Substrate-binding positions include Tyr85, 127-129 (DVE), and Tyr138. Acetyl-CoA is bound by residues 140 to 142 (VQL) and 148 to 153 (RKGVGK). Residue Thr174 coordinates substrate. Residue Asn179 coordinates acetyl-CoA. Tyr211 is a binding site for substrate.

It belongs to the acetyltransferase family. NAA40 subfamily.

It localises to the cytoplasm. It is found in the nucleus. It carries out the reaction N-terminal L-seryl-[histone H4] + acetyl-CoA = N-terminal N(alpha)-acetyl-L-seryl-[histone H4] + CoA + H(+). The catalysed reaction is N-terminal L-seryl-[histone H2A] + acetyl-CoA = N-terminal N(alpha)-acetyl-L-seryl-[histone H2A] + CoA + H(+). Its function is as follows. N-alpha-acetyltransferase that specifically mediates the acetylation of the N-terminal residues of histones H4 and H2A. In contrast to other N-alpha-acetyltransferase, has a very specific selectivity for histones H4 and H2A N-terminus and specifically recognizes the 'Ser-Gly-Arg-Gly sequence'. This chain is N-alpha-acetyltransferase 40 (naa40), found in Xenopus laevis (African clawed frog).